A 430-amino-acid chain; its full sequence is Dye-decolorizing peroxidase Tfu_3078 (430 aa).

The segment at residues 1–39 (MTEPDTERKGSSRRGFLAGLGAAALTGAGIGMAAGEVLR) is a signal peptide (tat-type signal). The segment at 42 to 75 (LPDSDPAASPEAEQRLRMAAQRADATAAPQPGIS) is disordered. The segment covering 60-69 (AAQRADATAA) has biased composition (low complexity). Residue Asp242 is the Proton acceptor of the active site. His338 provides a ligand contact to heme.

The protein belongs to the DyP-type peroxidase family. In terms of assembly, monomer. Heme b serves as cofactor. Exported by the Tat system. The position of the signal peptide cleavage has not been experimentally proven.

The protein localises to the secreted. It catalyses the reaction Reactive Blue 5 + 2 H2O2 = 2,2'-disulfonyl azobenzene + 3-[(4-amino-6-chloro-1,3,5-triazin-2-yl)amino]benzenesulfonate + phthalate + 2 H2O + 2 H(+). Functionally, peroxidase that is able to convert a large number of compounds, but its physiological substrate is not known. Shows high reactivity towards anthraquinone dyes (e.g. Reactive Blue 19) and a modest activity towards standard peroxidase substrates (such as guaiacol and 2,6-dimethoxyphenol) and azo dyes (e.g. Reactive Blue 5). Is also able to oxidize aromatic sulfides enantioselectively, resulting in the corresponding (R)-sulfoxides, but with a poor efficiency. Does not display catalase activity. The chain is Dye-decolorizing peroxidase Tfu_3078 from Thermobifida fusca (strain YX).